Consider the following 207-residue polypeptide: Small ribosomal subunit protein uS4c (207 aa).

The 64-residue stretch at 92-155 folds into the S4 RNA-binding domain; the sequence is MRLDNILFRL…TYQSILSKRI (64 aa).

It belongs to the universal ribosomal protein uS4 family. As to quaternary structure, part of the 30S ribosomal subunit. Contacts protein S5. The interaction surface between S4 and S5 is involved in control of translational fidelity.

The protein resides in the plastid. Its subcellular location is the chloroplast. Its function is as follows. One of the primary rRNA binding proteins, it binds directly to 16S rRNA where it nucleates assembly of the body of the 30S subunit. In terms of biological role, with S5 and S12 plays an important role in translational accuracy. The chain is Small ribosomal subunit protein uS4c (rps4) from Equisetum scirpoides (Dwarf-scouring rush).